A 365-amino-acid polypeptide reads, in one-letter code: Aminomethyltransferase (365 aa).

Belongs to the GcvT family. In terms of assembly, the glycine cleavage system is composed of four proteins: P, T, L and H.

The catalysed reaction is N(6)-[(R)-S(8)-aminomethyldihydrolipoyl]-L-lysyl-[protein] + (6S)-5,6,7,8-tetrahydrofolate = N(6)-[(R)-dihydrolipoyl]-L-lysyl-[protein] + (6R)-5,10-methylene-5,6,7,8-tetrahydrofolate + NH4(+). The glycine cleavage system catalyzes the degradation of glycine. This is Aminomethyltransferase from Yersinia pestis bv. Antiqua (strain Antiqua).